Here is a 294-residue protein sequence, read N- to C-terminus: Lysozyme M1 (294 aa).

The 214-residue stretch at 81–294 (GVQGIDVSHW…RLLALANNTA (214 aa)) folds into the Ch-type lysozyme domain. Active-site residues include D86, D175, and E177. An intrachain disulfide couples C185 to C224.

It belongs to the glycosyl hydrolase 25 family.

It is found in the secreted. The catalysed reaction is Hydrolysis of (1-&gt;4)-beta-linkages between N-acetylmuramic acid and N-acetyl-D-glucosamine residues in a peptidoglycan and between N-acetyl-D-glucosamine residues in chitodextrins.. In terms of biological role, this enzyme has both lysozyme (acetylmuramidase) and diacetylmuramidase activities. The sequence is that of Lysozyme M1 (acm) from Streptomyces globisporus.